Here is a 120-residue protein sequence, read N- to C-terminus: MANPHQIYRHDAAWDRQVFRSLATSLILHGHIKTTLDRAKRLRSVVEKLITKAKKNDLAARRQILSFLYGQKTKAGIKVMPYLFNKVAPRYQERNGGYTRIVRIPSRLGDNSKMAIIELV.

This sequence belongs to the bacterial ribosomal protein bL17 family. Part of the 50S ribosomal subunit. Contacts protein L32.

The protein is Large ribosomal subunit protein bL17 of Mesomycoplasma hyopneumoniae (strain 7448) (Mycoplasma hyopneumoniae).